Here is a 231-residue protein sequence, read N- to C-terminus: Heptaprenylglyceryl phosphate synthase (231 aa).

Lysine 12 provides a ligand contact to sn-glycerol 1-phosphate. 2 residues coordinate Mg(2+): aspartate 14 and threonine 40. Sn-glycerol 1-phosphate is bound by residues 159-164, glycine 189, and 209-210; these read YLEYSG and GN.

Belongs to the GGGP/HepGP synthase family. Group I subfamily. Homodimer. Mg(2+) is required as a cofactor.

The enzyme catalyses sn-glycerol 1-phosphate + all-trans-heptaprenyl diphosphate = 3-heptaprenyl-sn-glycero-1-phosphate + diphosphate. It functions in the pathway membrane lipid metabolism; glycerophospholipid metabolism. Its function is as follows. Prenyltransferase that catalyzes in vivo the transfer of the heptaprenyl moiety of heptaprenyl pyrophosphate (HepPP; 35 carbon atoms) to the C3 hydroxyl of sn-glycerol-1-phosphate (G1P), producing heptaprenylglyceryl phosphate (HepGP). This reaction is an ether-bond-formation step in the biosynthesis of archaea-type G1P-based membrane lipids found in Bacillales. This Staphylococcus haemolyticus (strain JCSC1435) protein is Heptaprenylglyceryl phosphate synthase.